The following is a 292-amino-acid chain: NAD kinase (292 aa).

Asp73 (proton acceptor) is an active-site residue. NAD(+) contacts are provided by residues Asp73–Gly74, Asn147–Glu148, His158, Arg175, Asp177, Thr188–Ser193, and Gln247.

It belongs to the NAD kinase family. A divalent metal cation is required as a cofactor.

It is found in the cytoplasm. The enzyme catalyses NAD(+) + ATP = ADP + NADP(+) + H(+). Involved in the regulation of the intracellular balance of NAD and NADP, and is a key enzyme in the biosynthesis of NADP. Catalyzes specifically the phosphorylation on 2'-hydroxyl of the adenosine moiety of NAD to yield NADP. In Sodalis glossinidius (strain morsitans), this protein is NAD kinase.